The following is a 23-amino-acid chain: Magainin-BM2 (23 aa).

In terms of tissue distribution, expressed by the skin glands.

The protein resides in the secreted. In terms of biological role, antimicrobial peptide. In Xenopus boumbaensis (Mawa clawed frog), this protein is Magainin-BM2.